The following is a 142-amino-acid chain: Class II hydrophobin 7 (142 aa).

A signal peptide spans 1 to 16 (MKFLTVAIVLAAAASA). Cystine bridges form between Cys73–Cys123, Cys84–Cys114, Cys85–Cys97, and Cys124–Cys135.

It belongs to the cerato-ulmin hydrophobin family. In terms of assembly, homodimer. Homodimers further self-assemble to form highly ordered films at water-air interfaces through intermolecular interactions.

The protein localises to the secreted. Its subcellular location is the cell wall. Aerial growth, conidiation, and dispersal of filamentous fungi in the environment rely upon a capability of their secreting small amphipathic proteins called hydrophobins (HPBs) with low sequence identity. Class I can self-assemble into an outermost layer of rodlet bundles on aerial cell surfaces, conferring cellular hydrophobicity that supports fungal growth, development and dispersal; whereas Class II form highly ordered films at water-air interfaces through intermolecular interactions but contribute nothing to the rodlet structure. This is Class II hydrophobin 7 from Trichoderma asperellum (strain ATCC 204424 / CBS 433.97 / NBRC 101777).